We begin with the raw amino-acid sequence, 692 residues long: E3 ubiquitin-protein ligase MARCHF7 (692 aa).

Met-1 carries the N-acetylmethionine modification. 6 disordered regions span residues 1–165 (MESK…SHRS), 201–280 (STNH…GRRT), 296–343 (FFSR…RASE), 360–425 (LSQN…HLFR), 440–474 (SLGA…RNTG), and 512–532 (SSAD…PEKL). Over residues 37 to 48 (YHSRDSSFRLDS) the composition is skewed to basic and acidic residues. Composition is skewed to polar residues over residues 61–83 (PYQS…SQNQ) and 95–132 (SCTN…SSMV). The segment covering 140 to 153 (LMRERRDLERRRDS) has biased composition (basic and acidic residues). The span at 201 to 214 (STNHQLPSEHQTVP) shows a compositional bias: polar residues. Residues 215-233 (SSRDSSRSSFRSHFSPRQS) show a composition bias toward low complexity. Over residues 235 to 272 (SFRNSSHPAFSYLSSRNETPTISSSERAGSSQRPFQES) the composition is skewed to polar residues. The segment covering 296-305 (FFSRRSSQDS) has biased composition (low complexity). Positions 306–336 (LNTRSLSSENYISPRTLTSQSRNNGASSSEV) are enriched in polar residues. A phosphoserine mark is found at Ser-318 and Ser-389. The span at 450 to 462 (ASGASGNASASGS) shows a compositional bias: low complexity. Positions 516-532 (GKSEKAKSAPSRDPEKL) are enriched in basic and acidic residues. The RING-CH-type zinc-finger motif lies at 545–615 (DEEEEGDLCR…ELCKEKLQLN (71 aa)). The Zn(2+) site is built by Cys-553, Cys-556, Cys-571, Cys-573, His-581, Cys-584, Cys-605, and Cys-608. Thr-687 carries the phosphothreonine modification. Residue Ser-688 is modified to Phosphoserine.

It is found in the cytoplasm. It carries out the reaction S-ubiquitinyl-[E2 ubiquitin-conjugating enzyme]-L-cysteine + [acceptor protein]-L-lysine = [E2 ubiquitin-conjugating enzyme]-L-cysteine + N(6)-ubiquitinyl-[acceptor protein]-L-lysine.. The protein operates within protein modification; protein ubiquitination. E3 ubiquitin-protein ligase which may specifically enhance the E2 activity of HIP2. E3 ubiquitin ligases accept ubiquitin from an E2 ubiquitin-conjugating enzyme in the form of a thioester and then directly transfer the ubiquitin to targeted substrates. May be involved in T-cell proliferation by regulating LIF secretion. May play a role in lysosome homeostasis. Promotes 'Lys-6', 'Lys-11' and 'Lys-63'-linked mixed polyubiquitination on ATG14 leading to the inhibition of autophagy by impairing the interaction between ATG14 and STX7. Participates in the dopamine-mediated negative regulation of the NLRP3 inflammasome by promoting its uibiquitination and subsequent degradation. The protein is E3 ubiquitin-protein ligase MARCHF7 (Marchf7) of Rattus norvegicus (Rat).